We begin with the raw amino-acid sequence, 347 residues long: UDP-N-acetylenolpyruvoylglucosamine reductase (347 aa).

Positions 24–195 constitute an FAD-binding PCMH-type domain; the sequence is FDARARVAAR…VAVTFRLPKA (172 aa). R171 is an active-site residue. S247 acts as the Proton donor in catalysis. E343 is an active-site residue.

The protein belongs to the MurB family. FAD is required as a cofactor.

It is found in the cytoplasm. It catalyses the reaction UDP-N-acetyl-alpha-D-muramate + NADP(+) = UDP-N-acetyl-3-O-(1-carboxyvinyl)-alpha-D-glucosamine + NADPH + H(+). The protein operates within cell wall biogenesis; peptidoglycan biosynthesis. In terms of biological role, cell wall formation. This Burkholderia mallei (strain NCTC 10247) protein is UDP-N-acetylenolpyruvoylglucosamine reductase.